Here is a 148-residue protein sequence, read N- to C-terminus: SsrA-binding protein (148 aa).

The protein belongs to the SmpB family.

It is found in the cytoplasm. Functionally, required for rescue of stalled ribosomes mediated by trans-translation. Binds to transfer-messenger RNA (tmRNA), required for stable association of tmRNA with ribosomes. tmRNA and SmpB together mimic tRNA shape, replacing the anticodon stem-loop with SmpB. tmRNA is encoded by the ssrA gene; the 2 termini fold to resemble tRNA(Ala) and it encodes a 'tag peptide', a short internal open reading frame. During trans-translation Ala-aminoacylated tmRNA acts like a tRNA, entering the A-site of stalled ribosomes, displacing the stalled mRNA. The ribosome then switches to translate the ORF on the tmRNA; the nascent peptide is terminated with the 'tag peptide' encoded by the tmRNA and targeted for degradation. The ribosome is freed to recommence translation, which seems to be the essential function of trans-translation. The polypeptide is SsrA-binding protein (Pseudothermotoga lettingae (strain ATCC BAA-301 / DSM 14385 / NBRC 107922 / TMO) (Thermotoga lettingae)).